The sequence spans 100 residues: Acylphosphatase (100 aa).

In terms of domain architecture, Acylphosphatase-like spans 14 to 100 (RLSAWVHGHV…RGDLTGFEER (87 aa)). Catalysis depends on residues R29 and N47.

It belongs to the acylphosphatase family.

The catalysed reaction is an acyl phosphate + H2O = a carboxylate + phosphate + H(+). The polypeptide is Acylphosphatase (acyP) (Nocardia farcinica (strain IFM 10152)).